Here is a 40-residue protein sequence, read N- to C-terminus: Natriuretic peptide PpNP-b (40 aa).

Positions 1–8 (SGSKTANI) are excised as a propeptide. The cysteines at positions 12 and 28 are disulfide-linked. The tract at residues 20–40 (IGTTSGMGCGRPRPKPTPGGS) is disordered.

Belongs to the natriuretic peptide family. In terms of tissue distribution, expressed by the venom gland.

It localises to the secreted. In terms of biological role, snake venom natriuretic peptide that targets both NPR1 and NPR2. Exhibits hypotensive and vasodepressor activities. The protein is Natriuretic peptide PpNP-b of Pseudechis porphyriacus (Red-bellied black snake).